A 285-amino-acid polypeptide reads, in one-letter code: UPF0603 protein At1g54780, chloroplastic (285 aa).

Disordered stretches follow at residues 1–48 and 228–251; these read METL…LSTR and GQPD…TKEE. The segment covering 22–40 has biased composition (polar residues); the sequence is HQTKPTSHSLSLSKPTTFS. Over residues 238–251 the composition is skewed to basic and acidic residues; it reads KDSKRESNFKTKEE. The chain crosses the membrane as a helical span at residues 259-279; the sequence is FSLVVGGLLVIAFVVPMAQYF.

Belongs to the UPF0603 family.

It is found in the plastid. The protein resides in the chloroplast thylakoid membrane. In Arabidopsis thaliana (Mouse-ear cress), this protein is UPF0603 protein At1g54780, chloroplastic.